Consider the following 149-residue polypeptide: UPF0178 protein Sama_3557 (149 aa).

Belongs to the UPF0178 family.

The sequence is that of UPF0178 protein Sama_3557 from Shewanella amazonensis (strain ATCC BAA-1098 / SB2B).